The primary structure comprises 179 residues: Endoribonuclease YbeY (179 aa).

His148, His152, and His158 together coordinate Zn(2+).

It belongs to the endoribonuclease YbeY family. Requires Zn(2+) as cofactor.

It localises to the cytoplasm. Its function is as follows. Single strand-specific metallo-endoribonuclease involved in late-stage 70S ribosome quality control and in maturation of the 3' terminus of the 16S rRNA. The polypeptide is Endoribonuclease YbeY (Prochlorococcus marinus (strain AS9601)).